Reading from the N-terminus, the 355-residue chain is Elongation factor Ts, mitochondrial (355 aa).

Residues 1–46 (MIRSLNFALRNCNKNILINSNKITINNGLLLKKNNFCTQSTSEVKV) constitute a mitochondrion transit peptide.

Belongs to the EF-Ts family.

It is found in the mitochondrion. Functionally, associates with the EF-Tu.GDP complex and induces the exchange of GDP to GTP. It remains bound to the aminoacyl-tRNA.EF-Tu.GTP complex up to the GTP hydrolysis stage on the ribosome. This is Elongation factor Ts, mitochondrial (tsfm) from Dictyostelium discoideum (Social amoeba).